Consider the following 84-residue polypeptide: Beta-defensin 119 (84 aa).

Residues 1–21 (MKLLYLFLAILLAIEEPVISG) form the signal peptide. 3 disulfides stabilise this stretch: C28–C55, C35–C49, and C39–C56.

This sequence belongs to the beta-defensin family.

The protein resides in the secreted. Has antibacterial activity. The polypeptide is Beta-defensin 119 (DEFB119) (Gorilla gorilla gorilla (Western lowland gorilla)).